The chain runs to 109 residues: uncharacterized protein (109 aa).

Helical transmembrane passes span 7 to 27 (IITI…PFFV), 37 to 57 (YIRY…VVYC), and 63 to 83 (ILTG…LGLH).

It belongs to the AzlD/HI_1737/HP1330 family.

It is found in the cell membrane. This is an uncharacterized protein from Haemophilus influenzae (strain ATCC 51907 / DSM 11121 / KW20 / Rd).